Consider the following 163-residue polypeptide: 3-isopropylmalate dehydratase small subunit (163 aa).

The protein belongs to the LeuD family. LeuD type 2 subfamily. As to quaternary structure, heterodimer of LeuC and LeuD.

It catalyses the reaction (2R,3S)-3-isopropylmalate = (2S)-2-isopropylmalate. Its pathway is amino-acid biosynthesis; L-leucine biosynthesis; L-leucine from 3-methyl-2-oxobutanoate: step 2/4. Its function is as follows. Catalyzes the isomerization between 2-isopropylmalate and 3-isopropylmalate, via the formation of 2-isopropylmaleate. The sequence is that of 3-isopropylmalate dehydratase small subunit from Endomicrobium trichonymphae.